A 50-amino-acid chain; its full sequence is Protein PsbN (50 aa).

Residues 14–34 (VAVTILAILLALTGFGLWTAF) traverse the membrane as a helical segment.

This sequence belongs to the PsbN family.

It is found in the cellular thylakoid membrane. In terms of biological role, may play a role in photosystem I and II biogenesis. This is Protein PsbN from Prochlorococcus marinus (strain MIT 9312).